We begin with the raw amino-acid sequence, 188 residues long: Elongation factor P (188 aa).

Belongs to the elongation factor P family.

The protein resides in the cytoplasm. It participates in protein biosynthesis; polypeptide chain elongation. Its function is as follows. Involved in peptide bond synthesis. Stimulates efficient translation and peptide-bond synthesis on native or reconstituted 70S ribosomes in vitro. Probably functions indirectly by altering the affinity of the ribosome for aminoacyl-tRNA, thus increasing their reactivity as acceptors for peptidyl transferase. The protein is Elongation factor P of Saccharopolyspora erythraea (strain ATCC 11635 / DSM 40517 / JCM 4748 / NBRC 13426 / NCIMB 8594 / NRRL 2338).